The primary structure comprises 142 residues: Large ribosomal subunit protein uL13 (142 aa).

This sequence belongs to the universal ribosomal protein uL13 family. Part of the 50S ribosomal subunit.

This protein is one of the early assembly proteins of the 50S ribosomal subunit, although it is not seen to bind rRNA by itself. It is important during the early stages of 50S assembly. The protein is Large ribosomal subunit protein uL13 of Geobacter sp. (strain M21).